The sequence spans 472 residues: Tryptophan--tRNA ligase, cytoplasmic (472 aa).

The WHEP-TRS domain maps to 9–65; it reads SPLELFNSIATQGELVRSLKAGNASKDEIDSAVKMLLSLKMSYKAAMGEDYKANCPP. At Lys-155 the chain carries N6-succinyllysine. A 'HIGH' region motif is present at residues 165–174; that stretch reads PSSEAMHVGH. The short motif at 350-354 is the 'KMSKS' region element; sequence KMSAS. Ser-352 bears the Phosphoserine mark.

It belongs to the class-I aminoacyl-tRNA synthetase family. Homodimer. Interacts with oxidized form of GAPDH. In terms of processing, proteolytic cleavage generates 2 forms; T1-TrpRS and T2-TrpRS.

It localises to the cytoplasm. The enzyme catalyses tRNA(Trp) + L-tryptophan + ATP = L-tryptophyl-tRNA(Trp) + AMP + diphosphate + H(+). Catalyzes the attachment of tryptophan to tRNA(Trp) in a two-step reaction: tryptophan is first activated by ATP to form Trp-AMP and then transferred to the acceptor end of the tRNA(Trp). Could also possess an angiostatic activity. The polypeptide is Tryptophan--tRNA ligase, cytoplasmic (WARS1) (Pongo abelii (Sumatran orangutan)).